A 242-amino-acid chain; its full sequence is Carboxy-S-adenosyl-L-methionine synthase (242 aa).

S-adenosyl-L-methionine-binding positions include Tyr-39, Gly-64–Ser-66, Asp-89–Asn-90, Asp-117–Ile-118, Asn-132, and Arg-199.

The protein belongs to the class I-like SAM-binding methyltransferase superfamily. Cx-SAM synthase family. As to quaternary structure, homodimer.

It carries out the reaction prephenate + S-adenosyl-L-methionine = carboxy-S-adenosyl-L-methionine + 3-phenylpyruvate + H2O. Catalyzes the conversion of S-adenosyl-L-methionine (SAM) to carboxy-S-adenosyl-L-methionine (Cx-SAM). This is Carboxy-S-adenosyl-L-methionine synthase from Aliivibrio salmonicida (strain LFI1238) (Vibrio salmonicida (strain LFI1238)).